We begin with the raw amino-acid sequence, 128 residues long: Large ribosomal subunit protein uL22 (128 aa).

Residues 1-22 (MARGHRSQIKRERNANKDTRPS) are disordered. Residues 9-21 (IKRERNANKDTRP) show a composition bias toward basic and acidic residues.

This sequence belongs to the universal ribosomal protein uL22 family. In terms of assembly, part of the 50S ribosomal subunit.

This protein binds specifically to 23S rRNA; its binding is stimulated by other ribosomal proteins, e.g. L4, L17, and L20. It is important during the early stages of 50S assembly. It makes multiple contacts with different domains of the 23S rRNA in the assembled 50S subunit and ribosome. In terms of biological role, the globular domain of the protein is located near the polypeptide exit tunnel on the outside of the subunit, while an extended beta-hairpin is found that lines the wall of the exit tunnel in the center of the 70S ribosome. This chain is Large ribosomal subunit protein uL22, found in Lachnoclostridium phytofermentans (strain ATCC 700394 / DSM 18823 / ISDg) (Clostridium phytofermentans).